A 503-amino-acid polypeptide reads, in one-letter code: Ell-associated factor Eaf (503 aa).

Composition is skewed to polar residues over residues 119–145 and 167–186; these read TRNE…NQGA and ENST…SRRN. Disordered stretches follow at residues 119–220, 250–360, and 372–503; these read TRNE…PAWD, GHAN…SQSV, and GGVL…DDDD. A Phosphoserine modification is found at S196. Residues 202-215 are compositionally biased toward low complexity; the sequence is SPSRPVPVHRSPQS. Composition is skewed to polar residues over residues 250 to 273 and 298 to 307; these read GHAN…STHI and MAQQQQQHPS. Residues 308–337 show a composition bias toward low complexity; that stretch reads NYGRGYNGGHNHAQQQQQQQRNSPPRQRPS. Acidic residues predominate over residues 385 to 400; it reads DSSDSDSGSDSDDSTE. Composition is skewed to low complexity over residues 406-437, 454-472, and 487-497; these read QGQQ…HHNQ, HQQQ…QKQQ, and LQNDLQLSSNS.

This sequence belongs to the EAF family.

It localises to the nucleus. In terms of biological role, promotes transcriptional elongation by Su(Tpl)/ELL. Essential for development. This chain is Ell-associated factor Eaf, found in Drosophila sechellia (Fruit fly).